Reading from the N-terminus, the 394-residue chain is NADH dehydrogenase [ubiquinone] iron-sulfur protein 2 (394 aa).

Belongs to the complex I 49 kDa subunit family. As to quaternary structure, complex I is composed of at least 49 different subunits. This is a component of the iron-sulfur (IP) fragment of the enzyme.

Its subcellular location is the mitochondrion. It catalyses the reaction a ubiquinone + NADH + 5 H(+)(in) = a ubiquinol + NAD(+) + 4 H(+)(out). Its function is as follows. Core subunit of the mitochondrial membrane respiratory chain NADH dehydrogenase (Complex I) that is believed to belong to the minimal assembly required for catalysis. Complex I functions in the transfer of electrons from NADH to the respiratory chain. The immediate electron acceptor for the enzyme is believed to be ubiquinone. Component of the iron-sulfur (IP) fragment of the enzyme. The polypeptide is NADH dehydrogenase [ubiquinone] iron-sulfur protein 2 (NAD7) (Arabidopsis thaliana (Mouse-ear cress)).